Reading from the N-terminus, the 333-residue chain is Global transcription regulator sge1 (333 aa).

Disordered regions lie at residues Pro-93–Pro-139 and Gln-241–Gln-307.

Belongs to the MIT1/WOR1 family.

It is found in the nucleus. Its function is as follows. Global transcriptional regulator that acts as an activator of secondary metabolism. Required for expression of a yet uncharacterized secondary metabolism gene cluster containing a non-canonical non-ribosomal peptide synthetase. Not required for conidiogenesis nor for pathogenicity, but is involved in vegetative growth. In Gibberella fujikuroi (strain CBS 195.34 / IMI 58289 / NRRL A-6831) (Bakanae and foot rot disease fungus), this protein is Global transcription regulator sge1.